A 144-amino-acid chain; its full sequence is 3-dehydroquinate dehydratase (144 aa).

The active-site Proton acceptor is Y23. Residues N74, H80, and D87 each contribute to the substrate site. H101 functions as the Proton donor in the catalytic mechanism. Substrate contacts are provided by residues L102–S103 and R112.

It belongs to the type-II 3-dehydroquinase family. In terms of assembly, homododecamer.

The enzyme catalyses 3-dehydroquinate = 3-dehydroshikimate + H2O. It participates in metabolic intermediate biosynthesis; chorismate biosynthesis; chorismate from D-erythrose 4-phosphate and phosphoenolpyruvate: step 3/7. Catalyzes a trans-dehydration via an enolate intermediate. The chain is 3-dehydroquinate dehydratase from Mesorhizobium japonicum (strain LMG 29417 / CECT 9101 / MAFF 303099) (Mesorhizobium loti (strain MAFF 303099)).